Consider the following 874-residue polypeptide: Collagen alpha-2(I) chain (874 aa).

Positions 1-874 (SGGFDFSFLP…FGYEGDFYRA (874 aa)) are disordered. Residues Pro-10 and Pro-13 each carry the 4-hydroxyproline modification. Allysine is present on Lys-16. Over residues 27 to 66 (LMGPRGPPGASGAPGPQGFQGPAGEPGEPGQTGPAGARGP) the composition is skewed to low complexity. Pro-34 and Pro-40 each carry 4-hydroxyproline. A 5-hydroxylysine; alternate modification is found at Lys-93. Lys-93 carries an O-linked (Gal...) hydroxylysine; alternate glycan. Composition is skewed to low complexity over residues 110–143 (ARGRVGAPGPAGARGSDGSVGPVGPAGPIGSAGP), 188–209 (PGANGLTGAKGAAGLPGVAGAP), and 218–236 (PGPVGARGLVGEPGPAGSK). Residues 237-246 (GESGGKGEPG) are compositionally biased toward gly residues. The segment covering 247 to 257 (SAGPQGPPGSS) has biased composition (low complexity). A 4-hydroxyproline mark is found at Pro-317 and Pro-320. Low complexity-rich tracts occupy residues 346–365 (LPGIDGRPGPIGPAGARGEA), 434–451 (PGESGAVGPSGAIGSRGP), and 463–473 (EPGVVGAPGTA). The segment covering 474–483 (GPAGSGGLPG) has biased composition (gly residues). Composition is skewed to low complexity over residues 491 to 538 (RGEV…PRGS) and 545 to 565 (VGPAGPNGFAGPAGAAGQPGA). The span at 566 to 575 (KGERGTKGPK) shows a compositional bias: basic and acidic residues. The span at 583 to 593 (PTGPVGSAGPA) shows a compositional bias: low complexity. A compositionally biased stretch (gly residues) spans 603 to 612 (GSRGDGGPPG). The segment covering 614-623 (TGFPGAAGRT) has biased composition (low complexity). The segment covering 648–662 (GPVGRGETGAGGPPG) has biased composition (gly residues). Low complexity-rich tracts occupy residues 663 to 697 (FTGEKGPSGEPGTAGPPGTAGPQGLLGAPGILGLP) and 705 to 724 (LPGVAGAVGEPGPLGIAGPP). Residues 725 to 744 (GARGDGNPGSDGPPGRGAAG) show a composition bias toward gly residues. Low complexity-rich tracts occupy residues 745-755 (APGPHGTVGPA) and 763-778 (EPGPVGSVGPVGALGP).

It belongs to the fibrillar collagen family. Trimers of one alpha 2(I) and two alpha 1(I) chains. Interacts (via C-terminus) with TMEM131 (via PapD-L domain); the interaction is direct and is involved in assembly and TRAPPIII ER-to-Golgi transport complex-dependent secretion of collagen. In terms of processing, prolines at the third position of the tripeptide repeating unit (G-X-Y) are hydroxylated in some or all of the chains. In terms of tissue distribution, expressed in bones.

The protein resides in the secreted. The protein localises to the extracellular space. It localises to the extracellular matrix. Functionally, type I collagen is a member of group I collagen (fibrillar forming collagen). The protein is Collagen alpha-2(I) chain of Megalonyx jeffersonii (Jefferson's ground sloth).